Here is a 1017-residue protein sequence, read N- to C-terminus: MMITADLIWDENLDNDCEVSKDIWEDDTFIDKSYLKVVLPSYDGVDTPIVYHFKLNDDLKINSIKIPTNSIGNLGKFGRLNTCSLEAVSGEPPVLKEIIIKIDERLYDKLALLPKANEKKQYFQIKYNLVNKQSVIHEGNIWGHVCEVVETKPFSQGVIDFSVTDIVLIRSKILSVENKHDRSLVNLQAFHDLSRIPLKCLHYPVERSLLLPEPPFDDDDSIYVFFPFDLLSKLKISSGSFVRLSNSKNSVLVRAFLLQSPNHYAVDGIYTTPFVLAQFDELPLVEVEPVYNNELAFPTASEVVISKVGNVLHTQKRYQELILQKLRYYFLTARRILSNGSLIPITIDSSFDEIILEDIDLDVNTIKSDDDCIVWFVVSNRKFENISNYDPKAEFFVDPKHTKLITSAMENRSLSSNTFNSALKYYGLPGVFHYRPDIFPVVNDIKNVINTHAEANKKVPNLPMILNLSSNVPKVGKASILRSIAIDLSYQFVDIDTLSVVFSSGSSDIATTFLGYLKGKLENLLPFTGNTIILIKHIDHILKKVDQNQDIQQSRQVKALEGDLISFIKSYSRIYPGVVFAFTSASIDNLPEGFRSEIKFDYVVHPPNEKQRRSIIDELLSTSDLFQKYGNRKLRIQCSNEIEISTLSLHSAGLSPYDIQYIISLAVADSLRKCNNYLLWRQNKIKVDMISIQNALEKVRSDYSASIGAPSIPNVTWDDVGGLSSVKDAIMETIDLPLKHPELFGSGLKKRSGILFYGPPGTGKTLLAKAIATNFSLNFFSVKGPELLNMYIGESEANVRRVFQKARDAKPCVIFFDEVDSVAPKRGNQGDSGGVMDRIVSQLLAELDGMSSDGDGVFIIGATNRPDLLDEALLRPGRFDKLIYLGIADTREKQANIMRALTRKFKVSSDINFDELVSDFPFSYTGADFYALCSDAMLKAMTRISKEIDEKVDKYNQDNGTSISIRYWFDHVCSDEDTDVIVKKEDFLNANKELIPSVSQQELEHYKQIRANFEDSK.

758–765 (GPPGTGKT) is an ATP binding site.

The protein belongs to the AAA ATPase family. As to quaternary structure, interacts with PEX1; forming the PEX1-PEX6 AAA ATPase complex, which is composed of a heterohexamer formed by a trimer of PEX1-PEX6 dimers.

The protein resides in the cytoplasm. It localises to the cytosol. The protein localises to the peroxisome membrane. The enzyme catalyses ATP + H2O = ADP + phosphate + H(+). Its function is as follows. Component of the PEX1-PEX6 AAA ATPase complex, a protein dislocase complex that mediates the ATP-dependent extraction of the PEX5 receptor from peroxisomal membranes, an essential step for PEX5 recycling. Specifically recognizes PEX5 monoubiquitinated at 'Cys-6', and pulls it out of the peroxisome lumen through the PEX2-PEX10-PEX12 retrotranslocation channel. Extraction by the PEX1-PEX6 AAA ATPase complex is accompanied by unfolding of the TPR repeats and release of bound cargo from PEX5. This is Peroxisomal ATPase PEX6 (PEX6) from Candida glabrata (strain ATCC 2001 / BCRC 20586 / JCM 3761 / NBRC 0622 / NRRL Y-65 / CBS 138) (Yeast).